A 238-amino-acid polypeptide reads, in one-letter code: Phosphoribosylaminoimidazole-succinocarboxamide synthase (238 aa).

Belongs to the SAICAR synthetase family.

It catalyses the reaction 5-amino-1-(5-phospho-D-ribosyl)imidazole-4-carboxylate + L-aspartate + ATP = (2S)-2-[5-amino-1-(5-phospho-beta-D-ribosyl)imidazole-4-carboxamido]succinate + ADP + phosphate + 2 H(+). It functions in the pathway purine metabolism; IMP biosynthesis via de novo pathway; 5-amino-1-(5-phospho-D-ribosyl)imidazole-4-carboxamide from 5-amino-1-(5-phospho-D-ribosyl)imidazole-4-carboxylate: step 1/2. The chain is Phosphoribosylaminoimidazole-succinocarboxamide synthase from Chlorobium phaeovibrioides (strain DSM 265 / 1930) (Prosthecochloris vibrioformis (strain DSM 265)).